Consider the following 178-residue polypeptide: Arginine repressor (178 aa).

Positions 1 to 20 are disordered; sequence MTEAQEPEYGGPSVPQTRTA.

It belongs to the ArgR family.

It localises to the cytoplasm. Its pathway is amino-acid biosynthesis; L-arginine biosynthesis [regulation]. Regulates arginine biosynthesis genes. In Streptomyces griseus subsp. griseus (strain JCM 4626 / CBS 651.72 / NBRC 13350 / KCC S-0626 / ISP 5235), this protein is Arginine repressor.